Here is a 183-residue protein sequence, read N- to C-terminus: Apo-citrate lyase phosphoribosyl-dephospho-CoA transferase (183 aa).

Belongs to the CitX family.

It carries out the reaction apo-[citrate lyase ACP] + 2'-(5''-triphospho-alpha-D-ribosyl)-3'-dephospho-CoA = holo-[citrate lyase ACP] + diphosphate. Functionally, transfers 2-(5''-triphosphoribosyl)-3'-dephosphocoenzyme-A on a serine residue to the apo-acyl carrier protein (gamma chain) of the citrate lyase to yield holo-acyl carrier protein. The polypeptide is Apo-citrate lyase phosphoribosyl-dephospho-CoA transferase (Escherichia coli O6:K15:H31 (strain 536 / UPEC)).